We begin with the raw amino-acid sequence, 66 residues long: Large ribosomal subunit protein uL29 (66 aa).

Belongs to the universal ribosomal protein uL29 family.

This Rhizobium johnstonii (strain DSM 114642 / LMG 32736 / 3841) (Rhizobium leguminosarum bv. viciae) protein is Large ribosomal subunit protein uL29.